The chain runs to 563 residues: Membrane protein insertase YidC (563 aa).

The helical transmembrane segment at 6 to 26 (TVLWMIFSFSLLLLWNNWQIH) threads the bilayer. The tract at residues 36-70 (PAPEAAATQQPKADANGTAASSTASIPSSPAAAPA) is disordered. The span at 54 to 70 (AASSTASIPSSPAAAPA) shows a compositional bias: low complexity. Transmembrane regions (helical) follow at residues 373–393 (WGWT…PLAA), 443–463 (LPMV…LASV), 482–502 (PFFI…KLNP), and 512–532 (VMMI…AGLV).

The protein belongs to the OXA1/ALB3/YidC family. Type 1 subfamily. Interacts with the Sec translocase complex via SecD. Specifically interacts with transmembrane segments of nascent integral membrane proteins during membrane integration.

It localises to the cell membrane. Its function is as follows. Required for the insertion and/or proper folding and/or complex formation of integral membrane proteins into the membrane. Involved in integration of membrane proteins that insert both dependently and independently of the Sec translocase complex, as well as at least some lipoproteins. Aids folding of multispanning membrane proteins. This Bordetella bronchiseptica (strain ATCC BAA-588 / NCTC 13252 / RB50) (Alcaligenes bronchisepticus) protein is Membrane protein insertase YidC.